Here is a 284-residue protein sequence, read N- to C-terminus: Tropomyosin alpha-3 chain (284 aa).

N-acetylmethionine is present on Met1. Residues 1-40 (MEAIKKKMQMLKLDKENALDRAEQAEAEQKQAEERSKQLE) form a disordered region. Residues 1–284 (MEAIKKKMQM…DHALNDMTSI (284 aa)) are a coiled coil. Residues 12-40 (KLDKENALDRAEQAEAEQKQAEERSKQLE) show a composition bias toward basic and acidic residues. Thr53 is subject to Phosphothreonine. Residues Ser61 and Ser87 each carry the phosphoserine modification. 2 positions are modified to phosphothreonine: Thr108 and Thr252. A Phosphotyrosine modification is found at Tyr261. A Phosphoserine modification is found at Ser271. Thr282 bears the Phosphothreonine mark. Phosphoserine is present on Ser283.

This sequence belongs to the tropomyosin family. As to quaternary structure, homodimer. Heterodimer of an alpha (TPM1, TPM3 or TPM4) and a beta (TPM2) chain. Interacts with TMOD1. Interacts with TNNT1.

The protein resides in the cytoplasm. Its subcellular location is the cytoskeleton. Its function is as follows. Binds to actin filaments in muscle and non-muscle cells. Plays a central role, in association with the troponin complex, in the calcium dependent regulation of vertebrate striated muscle contraction. Smooth muscle contraction is regulated by interaction with caldesmon. In non-muscle cells is implicated in stabilizing cytoskeleton actin filaments. This is Tropomyosin alpha-3 chain (TPM3) from Sus scrofa (Pig).